Reading from the N-terminus, the 94-residue chain is Large ribosomal subunit protein bL25 (94 aa).

It belongs to the bacterial ribosomal protein bL25 family. As to quaternary structure, part of the 50S ribosomal subunit; part of the 5S rRNA/L5/L18/L25 subcomplex. Contacts the 5S rRNA. Binds to the 5S rRNA independently of L5 and L18.

This is one of the proteins that binds to the 5S RNA in the ribosome where it forms part of the central protuberance. This Escherichia coli O6:K15:H31 (strain 536 / UPEC) protein is Large ribosomal subunit protein bL25.